The sequence spans 950 residues: General transcription factor II-I repeat domain-containing protein 2 (950 aa).

2 GTF2I-like repeats span residues 100–194 and 324–418; these read QVDS…QPGG and LSSL…SNVG.

The protein belongs to the TFII-I family.

The protein resides in the nucleus. The chain is General transcription factor II-I repeat domain-containing protein 2 (GTF2IRD2) from Bos taurus (Bovine).